A 57-amino-acid polypeptide reads, in one-letter code: Benzylsuccinate synthase gamma subunit (57 aa).

In terms of assembly, heterohexamer composed of 2 alpha subunits, 2 beta subunits and 2 gamma subunits.

The catalysed reaction is toluene + fumarate = 2-benzylsuccinate. It functions in the pathway xenobiotic degradation; toluene degradation. Its activity is regulated as follows. Activated by the benzylsuccinate synthase activating enzyme BssD. Rapidly inactivated by oxygen. Functionally, catalyzes the addition of fumarate to the methyl group of toluene, leading to the formation of benzylsuccinate. The sequence is that of Benzylsuccinate synthase gamma subunit (bssC) from Thauera aromatica.